A 311-amino-acid chain; its full sequence is Aspartate carbamoyltransferase catalytic subunit (311 aa).

Residues arginine 55 and threonine 56 each contribute to the carbamoyl phosphate site. An L-aspartate-binding site is contributed by lysine 85. 3 residues coordinate carbamoyl phosphate: arginine 106, histidine 135, and glutamine 138. L-aspartate contacts are provided by arginine 168 and arginine 230. Residues leucine 268 and proline 269 each contribute to the carbamoyl phosphate site.

This sequence belongs to the aspartate/ornithine carbamoyltransferase superfamily. ATCase family. In terms of assembly, heterododecamer (2C3:3R2) of six catalytic PyrB chains organized as two trimers (C3), and six regulatory PyrI chains organized as three dimers (R2).

It carries out the reaction carbamoyl phosphate + L-aspartate = N-carbamoyl-L-aspartate + phosphate + H(+). It participates in pyrimidine metabolism; UMP biosynthesis via de novo pathway; (S)-dihydroorotate from bicarbonate: step 2/3. In terms of biological role, catalyzes the condensation of carbamoyl phosphate and aspartate to form carbamoyl aspartate and inorganic phosphate, the committed step in the de novo pyrimidine nucleotide biosynthesis pathway. The polypeptide is Aspartate carbamoyltransferase catalytic subunit (Pectobacterium carotovorum subsp. carotovorum (strain PC1)).